Reading from the N-terminus, the 671-residue chain is UvrABC system protein B (671 aa).

Positions 26–414 (EGLENGLAHQ…GGDIIEQVVR (389 aa)) constitute a Helicase ATP-binding domain. 39 to 46 (GVTGSGKT) lines the ATP pocket. The Beta-hairpin motif lies at 92–115 (YYDYYQPEAYVPSSDTFIEKDASV). Residues 431–593 (QVDDLLSEIR…IIPQGLNKKI (163 aa)) enclose the Helicase C-terminal domain. Residues 631 to 666 (DQKIRELEAKMYTYAQNLEFEQAAELRDQVHQLRQQ) enclose the UVR domain.

The protein belongs to the UvrB family. Forms a heterotetramer with UvrA during the search for lesions. Interacts with UvrC in an incision complex.

Its subcellular location is the cytoplasm. Functionally, the UvrABC repair system catalyzes the recognition and processing of DNA lesions. A damage recognition complex composed of 2 UvrA and 2 UvrB subunits scans DNA for abnormalities. Upon binding of the UvrA(2)B(2) complex to a putative damaged site, the DNA wraps around one UvrB monomer. DNA wrap is dependent on ATP binding by UvrB and probably causes local melting of the DNA helix, facilitating insertion of UvrB beta-hairpin between the DNA strands. Then UvrB probes one DNA strand for the presence of a lesion. If a lesion is found the UvrA subunits dissociate and the UvrB-DNA preincision complex is formed. This complex is subsequently bound by UvrC and the second UvrB is released. If no lesion is found, the DNA wraps around the other UvrB subunit that will check the other stand for damage. The polypeptide is UvrABC system protein B (Yersinia pestis).